We begin with the raw amino-acid sequence, 247 residues long: Agamous-like MADS-box protein FUL-L (247 aa).

The 61-residue stretch at 1–61 (MGRGRVQLKR…GKLFEYSSDS (61 aa)) folds into the MADS-box domain. The K-box domain occupies 88–178 (QGNWSMDYPK…AKKVKEKEKV (91 aa)). The disordered stretch occupies residues 224 to 247 (EDGAEARPSPNTLMPPWMLRHVNE).

Expressed in tendrils and flowers.

The protein resides in the nucleus. Functionally, probable transcription factor involved in flower development. This chain is Agamous-like MADS-box protein FUL-L, found in Vitis vinifera (Grape).